Consider the following 448-residue polypeptide: Probable glycine dehydrogenase (decarboxylating) subunit 1 (448 aa).

Belongs to the GcvP family. N-terminal subunit subfamily. As to quaternary structure, the glycine cleavage system is composed of four proteins: P, T, L and H. In this organism, the P 'protein' is a heterodimer of two subunits.

It carries out the reaction N(6)-[(R)-lipoyl]-L-lysyl-[glycine-cleavage complex H protein] + glycine + H(+) = N(6)-[(R)-S(8)-aminomethyldihydrolipoyl]-L-lysyl-[glycine-cleavage complex H protein] + CO2. Its function is as follows. The glycine cleavage system catalyzes the degradation of glycine. The P protein binds the alpha-amino group of glycine through its pyridoxal phosphate cofactor; CO(2) is released and the remaining methylamine moiety is then transferred to the lipoamide cofactor of the H protein. This chain is Probable glycine dehydrogenase (decarboxylating) subunit 1, found in Listeria monocytogenes serotype 4b (strain F2365).